Reading from the N-terminus, the 375-residue chain is uncharacterized protein (375 aa).

7 helical membrane-spanning segments follow: residues 21 to 41 (LLLL…IVLF), 66 to 86 (IIVF…FCVS), 160 to 180 (LVGV…PGIV), 203 to 223 (LVGL…HLLI), 234 to 254 (FYMV…FHLF), 289 to 309 (VISF…YFLI), and 338 to 358 (FFLM…MLFF).

The protein resides in the cell membrane. This is an uncharacterized protein from Mycoplasma genitalium (strain ATCC 33530 / DSM 19775 / NCTC 10195 / G37) (Mycoplasmoides genitalium).